The following is a 971-amino-acid chain: Translation initiation factor IF-2 (971 aa).

Positions 49-63 (HLRKSHGATDGDKRK) are enriched in basic and acidic residues. Disordered regions lie at residues 49-86 (HLRKSHGATDGDKRKITLTRKHTSEIKQSDATGKARTI) and 101-385 (DVAE…APTE). Residues 105–114 (GAEQGQAQVA) are compositionally biased toward low complexity. Residues 121-177 (ELKRREEEARREAELLEKQAQELRERQERLEREEAERRAREEAAEAQRRRAEEEAAA) show a composition bias toward basic and acidic residues. Over residues 178–209 (KRAAAAAVEAQQVAAQQAAEAQQETAGAQSAQ) the composition is skewed to low complexity. Basic and acidic residues predominate over residues 210 to 261 (DEARAAAERAAQREAAKKAEDAAREAADKTRAEQEEIRKRREAAEAEARAIR). Residues 277–286 (PPKPVEPPKP) show a composition bias toward pro residues. The segment covering 298-325 (KPAGASAARPAVKKPAGAAPATTAPAGA) has biased composition (low complexity). A compositionally biased stretch (gly residues) spans 355–368 (SSGGVDRGWRGGPK). In terms of domain architecture, tr-type G spans 471-640 (PRPPVVTVMG…LLQAEVLELK (170 aa)). Positions 480–487 (GHVDHGKT) are G1. Residue 480–487 (GHVDHGKT) participates in GTP binding. The tract at residues 505-509 (GITQH) is G2. A G3 region spans residues 526–529 (DTPG). Residues 526–530 (DTPGH) and 580–583 (NKID) contribute to the GTP site. Residues 580–583 (NKID) form a G4 region. A G5 region spans residues 616 to 618 (SAK).

Belongs to the TRAFAC class translation factor GTPase superfamily. Classic translation factor GTPase family. IF-2 subfamily.

It is found in the cytoplasm. In terms of biological role, one of the essential components for the initiation of protein synthesis. Protects formylmethionyl-tRNA from spontaneous hydrolysis and promotes its binding to the 30S ribosomal subunits. Also involved in the hydrolysis of GTP during the formation of the 70S ribosomal complex. This Burkholderia ambifaria (strain ATCC BAA-244 / DSM 16087 / CCUG 44356 / LMG 19182 / AMMD) (Burkholderia cepacia (strain AMMD)) protein is Translation initiation factor IF-2.